The chain runs to 76 residues: ATP synthase subunit c (76 aa).

Transmembrane regions (helical) follow at residues 7-27 and 50-70; these read VATA…IGII and FIGI…AFLI.

The protein belongs to the ATPase C chain family. F-type ATPases have 2 components, F(1) - the catalytic core - and F(0) - the membrane proton channel. F(1) has five subunits: alpha(3), beta(3), gamma(1), delta(1), epsilon(1). F(0) has four main subunits: a(1), b(1), b'(1) and c(10-14). The alpha and beta chains form an alternating ring which encloses part of the gamma chain. F(1) is attached to F(0) by a central stalk formed by the gamma and epsilon chains, while a peripheral stalk is formed by the delta, b and b' chains.

Its subcellular location is the cell membrane. In terms of biological role, f(1)F(0) ATP synthase produces ATP from ADP in the presence of a proton or sodium gradient. F-type ATPases consist of two structural domains, F(1) containing the extramembraneous catalytic core and F(0) containing the membrane proton channel, linked together by a central stalk and a peripheral stalk. During catalysis, ATP synthesis in the catalytic domain of F(1) is coupled via a rotary mechanism of the central stalk subunits to proton translocation. Functionally, key component of the F(0) channel; it plays a direct role in translocation across the membrane. A homomeric c-ring of between 10-14 subunits forms the central stalk rotor element with the F(1) delta and epsilon subunits. This Chloroflexus aurantiacus (strain ATCC 29366 / DSM 635 / J-10-fl) protein is ATP synthase subunit c.